The following is a 299-amino-acid chain: MAYSQPSFALLCRNNQTGQEFNSGDTSFRVNVSPVVQYDKSISVLDLSQLVSCQNEDSTGQNYDYLKILKGSGFSPALDTKTYGRLDFTSRPTGYARQLPLQFDLQVTEAFYQYGVWKPFPAKLYLYPEPGVFGKVINNGDLLATLYVNKFSTKGQEAGERNFTWRFYATNDVHIQTGTCRVSSNNVKVDLPSYPGGPVTVPLTVRCDQTQSVSYTLSGPVTGSGNTVFANTAASGAGGVGVQLSDKAGPVPAGQPRSLGQVGSSPVSLGLKASYALTGQASLTPGAVQSVINVTFSYN.

This sequence belongs to the fimbrial protein family.

It is found in the fimbrium. In terms of biological role, fimbriae (also called pili), polar filaments radiating from the surface of the bacterium to a length of 0.5-1.5 micrometers and numbering 100-300 per cell, enable bacteria to colonize the epithelium of specific host organs. Functionally, a minor fimbrial subunit. This protein is necessary for full expression of S-specific binding. S-fimbrial adhesins enable pathogenic E.coli causing urinary-tract infections or newborn meningitis to attach to glycoproteins terminating with alpha-sialic acid-(2-3)-beta-Gal. In Escherichia coli O6:K15:H31 (strain 536 / UPEC), this protein is S-fimbrial protein subunit SfaH (sfaH).